Reading from the N-terminus, the 348-residue chain is Small ribosomal subunit biogenesis GTPase RsgA (348 aa).

The CP-type G domain occupies 72 to 230; that stretch reads RNQLSRPAIA…IADTPGFNQP (159 aa). Residues 121–124 and 172–180 contribute to the GTP site; these read TKAD and GPSGVGKSS. Positions 255, 260, 262, and 268 each coordinate Zn(2+). Residues 305–322 are compositionally biased toward basic and acidic residues; the sequence is AKSDRQGQQRLEPLLDAK. Residues 305–348 are disordered; it reads AKSDRQGQQRLEPLLDAKKYRRRSRRQQHQHVNPMAEEVLDSEW. Positions 323–333 are enriched in basic residues; the sequence is KYRRRSRRQQH.

It belongs to the TRAFAC class YlqF/YawG GTPase family. RsgA subfamily. As to quaternary structure, monomer. Associates with 30S ribosomal subunit, binds 16S rRNA. Zn(2+) is required as a cofactor.

Its subcellular location is the cytoplasm. Functionally, one of several proteins that assist in the late maturation steps of the functional core of the 30S ribosomal subunit. Helps release RbfA from mature subunits. May play a role in the assembly of ribosomal proteins into the subunit. Circularly permuted GTPase that catalyzes slow GTP hydrolysis, GTPase activity is stimulated by the 30S ribosomal subunit. The polypeptide is Small ribosomal subunit biogenesis GTPase RsgA (Thermosynechococcus vestitus (strain NIES-2133 / IAM M-273 / BP-1)).